The following is a 205-amino-acid chain: Phosphoenolpyruvate guanylyltransferase (205 aa).

Phosphoenolpyruvate-binding residues include T137, G153, and S156.

This sequence belongs to the CofC family.

It carries out the reaction phosphoenolpyruvate + GTP + H(+) = enolpyruvoyl-2-diphospho-5'-guanosine + diphosphate. It participates in cofactor biosynthesis; coenzyme F420 biosynthesis. Functionally, guanylyltransferase that catalyzes the activation of phosphoenolpyruvate (PEP) as enolpyruvoyl-2-diphospho-5'-guanosine, via the condensation of PEP with GTP. It is involved in the biosynthesis of coenzyme F420, a hydride carrier cofactor. In Rubrobacter xylanophilus (strain DSM 9941 / JCM 11954 / NBRC 16129 / PRD-1), this protein is Phosphoenolpyruvate guanylyltransferase.